The chain runs to 698 residues: SPX domain-containing membrane protein OsI_21475 (698 aa).

The SPX domain maps to 2 to 145 (VNFGKKLMAD…GYRFTDYYVT (144 aa)). The next 6 membrane-spanning stretches (helical) occupy residues 248–268 (FMSL…TYII), 279–299 (LGAA…AQIF), 316–336 (LIFS…AYDM), 339–357 (LTVL…ARAV), 376–396 (AGFV…AGLL), and 412–432 (LPGW…WISF). Positions 467-495 (LLRDSSKKDEDDDEEVDDSEEGTHDSRKP) are disordered. Residues 476-486 (EDDDEEVDDSE) show a composition bias toward acidic residues. The next 5 membrane-spanning stretches (helical) occupy residues 514-534 (LLIY…SSVI), 545-565 (AVAI…AVVG), 577-597 (LLMV…KITS), 605-625 (VVSA…NLSL), and 671-691 (LLNV…ASTF).

This sequence belongs to the major facilitator superfamily.

Its subcellular location is the membrane. The chain is SPX domain-containing membrane protein OsI_21475 from Oryza sativa subsp. indica (Rice).